The primary structure comprises 572 residues: Probable transporter MCH1 (572 aa).

The span at M1 to D29 shows a compositional bias: polar residues. Residues M1–I39 form a disordered region. Residue N30 is glycosylated (N-linked (GlcNAc...) asparagine). 10 helical membrane-spanning segments follow: residues L50–S70, A89–C109, P116–Y136, F159–V179, G193–A213, V232–F252, L335–I355, F426–V446, L459–W479, and Y488–A508. N515 carries N-linked (GlcNAc...) asparagine glycosylation. A helical transmembrane segment spans residues P539 to W559.

This sequence belongs to the major facilitator superfamily.

Its subcellular location is the vacuole membrane. Probable transporter. The chain is Probable transporter MCH1 (MCH1) from Gibberella zeae (strain ATCC MYA-4620 / CBS 123657 / FGSC 9075 / NRRL 31084 / PH-1) (Wheat head blight fungus).